The primary structure comprises 242 residues: Alpha-aspartyl dipeptidase (242 aa).

Residues Ser-125, Asp-140, and His-162 each act as charge relay system in the active site.

The protein belongs to the peptidase S51 family.

Its subcellular location is the cytoplasm. The enzyme catalyses Dipeptidase E catalyzes the hydrolysis of dipeptides Asp-|-Xaa. It does not act on peptides with N-terminal Glu, Asn or Gln, nor does it cleave isoaspartyl peptides.. Its function is as follows. Hydrolyzes dipeptides containing N-terminal aspartate residues. The chain is Alpha-aspartyl dipeptidase (aad-a) from Xenopus laevis (African clawed frog).